Reading from the N-terminus, the 141-residue chain is Large ribosomal subunit protein uL11 (141 aa).

This sequence belongs to the universal ribosomal protein uL11 family. Part of the ribosomal stalk of the 50S ribosomal subunit. Interacts with L10 and the large rRNA to form the base of the stalk. L10 forms an elongated spine to which L12 dimers bind in a sequential fashion forming a multimeric L10(L12)X complex. Post-translationally, one or more lysine residues are methylated.

Its function is as follows. Forms part of the ribosomal stalk which helps the ribosome interact with GTP-bound translation factors. The protein is Large ribosomal subunit protein uL11 of Picosynechococcus sp. (strain ATCC 27264 / PCC 7002 / PR-6) (Agmenellum quadruplicatum).